The following is a 141-amino-acid chain: Large ribosomal subunit protein uL11 (141 aa).

The protein belongs to the universal ribosomal protein uL11 family. In terms of assembly, part of the ribosomal stalk of the 50S ribosomal subunit. Interacts with L10 and the large rRNA to form the base of the stalk. L10 forms an elongated spine to which L12 dimers bind in a sequential fashion forming a multimeric L10(L12)X complex. Post-translationally, one or more lysine residues are methylated.

In terms of biological role, forms part of the ribosomal stalk which helps the ribosome interact with GTP-bound translation factors. The protein is Large ribosomal subunit protein uL11 of Limosilactobacillus reuteri (strain DSM 20016) (Lactobacillus reuteri).